The primary structure comprises 281 residues: Glyoxalase 1 (281 aa).

2 consecutive VOC domains span residues 4-127 (RALH…IGKA) and 132-251 (KVLR…FVGD).

It belongs to the glyoxalase I family.

Functionally, thought to act as a glyoxalase. May remove methylglyoxal from mitochondrial proteins. Has roles in reducing oxidative stress and increasing lifespan. The protein is Glyoxalase 1 of Caenorhabditis briggsae.